A 724-amino-acid polypeptide reads, in one-letter code: Small conductance calcium-activated potassium channel protein 3 (724 aa).

The segment covering 1–11 (MDTSGHFHDSG) has biased composition (basic and acidic residues). Disordered stretches follow at residues 1 to 161 (MDTS…RDSN) and 232 to 251 (ATHN…FPKA). Pro residues predominate over residues 34 to 58 (QPPPPPPPPAPPAAPQQPPGPPLQP). Residues 59-88 (QPLQLQQQQQQQQQQPPHPLSQLAQLQSQP) are compositionally biased toward low complexity. Residues 105–125 (PSSNSTAILHPSSRQGSQLNL) are compositionally biased toward polar residues. Positions 131–140 (GHSPSSTATS) are enriched in low complexity. Residue serine 160 is modified to Phosphoserine. A compositionally biased stretch (polar residues) spans 232 to 249 (ATHNHQHAGTTASSTTFP). Residues 281-301 (LIFGMFGIVVMVIETELSWGL) traverse the membrane as a helical segment. A helical transmembrane segment spans residues 308 to 328 (FSLALKCLISLSTIILLGLII). The helical transmembrane segment at 359 to 379 (ISLEMLVCAIHPIPGEYKFFW) threads the bilayer. A helical transmembrane segment spans residues 398–418 (IILSIPMFLRLYLIARVMLLH). Residues 447–467 (LMTICPGTVLLVFSISLWIIA) traverse the membrane as a helical segment. The segment at residues 487 to 507 (FLGAMWLISITFLSIGYGDMV) is an intramembrane region (pore-forming). The chain crosses the membrane as a helical span at residues 516–536 (VCLLTGIMGAGCTALVVAVVA). Residues 554–630 (DTQLTKRIKN…LVDLSKMQNV (77 aa)) form a calmodulin-binding region. Positions 635–662 (ITELNDRSEDLEKQIGSLESKLEHLTAS) form a coiled coil. Positions 702-724 (LSDSPIGVSSTSFPTPYTSSSSC) are disordered. Low complexity predominate over residues 710 to 724 (SSTSFPTPYTSSSSC).

Belongs to the potassium channel KCNN family. KCa2.3/KCNN3 subfamily. As to quaternary structure, homodimer. Heteromultimer with KCNN2 or KCNN1; this modulates plasma membrane expression and consequently the small conductance calcium-activated potassium channel activity. The complex is composed of 4 channel subunits each of which binds to a calmodulin subunit which regulates the channel activity through calcium-binding. Interacts with CALM1.

Its subcellular location is the cell membrane. The protein localises to the cytoplasm. It is found in the myofibril. It localises to the sarcomere. The protein resides in the z line. It catalyses the reaction K(+)(in) = K(+)(out). Its activity is regulated as follows. Inhibited by bee venom neurotoxin apamin. Functionally, small conductance calcium-activated potassium channel that mediates the voltage-independent transmembrane transfer of potassium across the cell membrane through a constitutive interaction with calmodulin which binds the intracellular calcium allowing its opening. The current is characterized by a voltage-independent activation, an intracellular calcium concentration increase-dependent activation and a single-channel conductance of 10 picosiemens. Also presents an inwardly rectifying current, thus reducing its already small outward conductance of potassium ions, which is particularly the case when the membrane potential displays positive values, above + 20 mV. Activation is followed by membrane hyperpolarization. Thought to regulate neuronal excitability by contributing to the slow component of synaptic afterhyperpolarization. In Sus scrofa (Pig), this protein is Small conductance calcium-activated potassium channel protein 3.